Reading from the N-terminus, the 494-residue chain is Probable cytosol aminopeptidase (494 aa).

Residues Lys-260 and Asp-265 each contribute to the Mn(2+) site. Lys-272 is an active-site residue. 3 residues coordinate Mn(2+): Asp-283, Asp-342, and Glu-344. Residue Arg-346 is part of the active site.

This sequence belongs to the peptidase M17 family. It depends on Mn(2+) as a cofactor.

The protein localises to the cytoplasm. It carries out the reaction Release of an N-terminal amino acid, Xaa-|-Yaa-, in which Xaa is preferably Leu, but may be other amino acids including Pro although not Arg or Lys, and Yaa may be Pro. Amino acid amides and methyl esters are also readily hydrolyzed, but rates on arylamides are exceedingly low.. It catalyses the reaction Release of an N-terminal amino acid, preferentially leucine, but not glutamic or aspartic acids.. Its function is as follows. Presumably involved in the processing and regular turnover of intracellular proteins. Catalyzes the removal of unsubstituted N-terminal amino acids from various peptides. This is Probable cytosol aminopeptidase from Bacillus cereus (strain AH187).